A 283-amino-acid chain; its full sequence is MSAETELLGMPESLKDIKHIILVLSGKGGVGKSSVTTQTALTLCLKGYKVGVLDIDLTGPSLPRMFGLENKQVYQASKGWIPVSVPTTSGGELKLMSLGFLLDDRGNSVVWRGPKKSAMIKQFIKDVDWGDLDYLIIDTPPGTSDEHISIAEELRWAAPDGAIIVTTPQGVATADVRKEINFCKKVNFNILGVIENMSGFICPHCAECTDIFSRGGGFKLASEYNVPYLGNIPIDPTFVELIEKQTGFKESLVDLYKDSGLYVIFSKILDNVLNGEVKSGTDQ.

26–33 (GKGGVGKS) provides a ligand contact to ATP. Residues cysteine 202 and cysteine 205 each contribute to the [4Fe-4S] cluster site.

It belongs to the Mrp/NBP35 ATP-binding proteins family. NUBP2/CFD1 subfamily. Heterotetramer of 2 NBP35 and 2 CFD1 chains. Requires [4Fe-4S] cluster as cofactor.

The protein resides in the cytoplasm. Functionally, component of the cytosolic iron-sulfur (Fe/S) protein assembly (CIA) machinery. Required for maturation of extramitochondrial Fe-S proteins. The NBP35-CFD1 heterotetramer forms a Fe-S scaffold complex, mediating the de novo assembly of an Fe-S cluster and its transfer to target apoproteins. Required for biogenesis and export of both ribosomal subunits, which may reflect a role in assembly of the Fe/S clusters in RLI1, a protein which performs rRNA processing and ribosome export. In Kluyveromyces lactis (strain ATCC 8585 / CBS 2359 / DSM 70799 / NBRC 1267 / NRRL Y-1140 / WM37) (Yeast), this protein is Cytosolic Fe-S cluster assembly factor CFD1.